The primary structure comprises 265 residues: Tryptophan synthase alpha chain (265 aa).

Active-site proton acceptor residues include E47 and D58.

Belongs to the TrpA family. In terms of assembly, tetramer of two alpha and two beta chains.

The enzyme catalyses (1S,2R)-1-C-(indol-3-yl)glycerol 3-phosphate + L-serine = D-glyceraldehyde 3-phosphate + L-tryptophan + H2O. Its pathway is amino-acid biosynthesis; L-tryptophan biosynthesis; L-tryptophan from chorismate: step 5/5. Its function is as follows. The alpha subunit is responsible for the aldol cleavage of indoleglycerol phosphate to indole and glyceraldehyde 3-phosphate. This chain is Tryptophan synthase alpha chain, found in Methanoregula boonei (strain DSM 21154 / JCM 14090 / 6A8).